The primary structure comprises 456 residues: Bis(5'-adenosyl)-triphosphatase enpp4 (456 aa).

The N-terminal stretch at 1 to 18 is a signal peptide; that stretch reads MFNMKILVIPLFWGLVTG. Residues 19–410 are Extracellular-facing; it reads YKGNSSDSSA…DQWCINLPEA (392 aa). The Zn(2+) site is built by aspartate 37 and threonine 73. Threonine 73 serves as the catalytic AMP-threonine intermediate. Asparagine 94 provides a ligand contact to substrate. The N-linked (GlcNAc...) asparagine glycan is linked to asparagine 148. Residue tyrosine 157 coordinates substrate. Asparagine 169 carries an N-linked (GlcNAc...) asparagine glycan. Residues aspartate 192, histidine 196, aspartate 240, and histidine 241 each contribute to the Zn(2+) site. Aspartate 192 is a binding site for substrate. Cysteine 257 and cysteine 290 form a disulfide bridge. Residues asparagine 279 and asparagine 330 are each glycosylated (N-linked (GlcNAc...) asparagine). Histidine 339 is a Zn(2+) binding site. N-linked (GlcNAc...) asparagine glycosylation occurs at asparagine 389. A disulfide bridge links cysteine 397 with cysteine 404. Residues 411–431 traverse the membrane as a helical segment; the sequence is IGIVVSALLVLTMLTGLMIFM. At 432-456 the chain is on the cytoplasmic side; sequence RSRASTSRPFSRLQLQEDDDDPLID.

Belongs to the nucleotide pyrophosphatase/phosphodiesterase family. Requires Zn(2+) as cofactor.

The protein resides in the cell membrane. It catalyses the reaction P(1),P(3)-bis(5'-adenosyl) triphosphate + H2O = AMP + ADP + 2 H(+). Its function is as follows. Hydrolyzes extracellular Ap3A into AMP and ADP, and Ap4A into AMP and ATP. Ap3A and Ap4A are diadenosine polyphosphates thought to induce proliferation of vascular smooth muscle cells. Acts as a procoagulant, mediating platelet aggregation at the site of nascent thrombus via release of ADP from Ap3A and activation of ADP receptors. This is Bis(5'-adenosyl)-triphosphatase enpp4 (Enpp4) from Mus musculus (Mouse).